Reading from the N-terminus, the 130-residue chain is Small ribosomal subunit protein uS11 (130 aa).

Positions 1 to 21 are disordered; it reads MAPQSKRSGGRKQKKHVPNGV. The segment covering 8–17 has biased composition (basic residues); sequence SGGRKQKKHV.

Belongs to the universal ribosomal protein uS11 family. Part of the 30S ribosomal subunit. Interacts with proteins S7 and S18. Binds to IF-3.

In terms of biological role, located on the platform of the 30S subunit, it bridges several disparate RNA helices of the 16S rRNA. Forms part of the Shine-Dalgarno cleft in the 70S ribosome. The sequence is that of Small ribosomal subunit protein uS11 from Acaryochloris marina (strain MBIC 11017).